We begin with the raw amino-acid sequence, 226 residues long: Urease accessory protein UreF (226 aa).

The protein belongs to the UreF family. UreD, UreF and UreG form a complex that acts as a GTP-hydrolysis-dependent molecular chaperone, activating the urease apoprotein by helping to assemble the nickel containing metallocenter of UreC. The UreE protein probably delivers the nickel.

It localises to the cytoplasm. In terms of biological role, required for maturation of urease via the functional incorporation of the urease nickel metallocenter. The chain is Urease accessory protein UreF from Burkholderia ambifaria (strain ATCC BAA-244 / DSM 16087 / CCUG 44356 / LMG 19182 / AMMD) (Burkholderia cepacia (strain AMMD)).